Reading from the N-terminus, the 353-residue chain is ATP-dependent kinase YFH7 (353 aa).

Position 31-39 (31-39) interacts with ATP; that stretch reads GPPGSGKST.

This sequence belongs to the YFH7 family.

In terms of biological role, ATP-dependent kinase that could be involved in endoplasmic reticulum membrane assembly. The chain is ATP-dependent kinase YFH7 (YFH7) from Kluyveromyces lactis (strain ATCC 8585 / CBS 2359 / DSM 70799 / NBRC 1267 / NRRL Y-1140 / WM37) (Yeast).